Consider the following 204-residue polypeptide: Large ribosomal subunit protein eL15 (204 aa).

Belongs to the eukaryotic ribosomal protein eL15 family.

This Tetrahymena thermophila (strain SB210) protein is Large ribosomal subunit protein eL15 (RPL15).